The following is a 686-amino-acid chain: Glycine--tRNA ligase beta subunit (686 aa).

Residues Ala-65–Thr-99 are disordered. Residues Ser-67–Glu-84 show a composition bias toward basic and acidic residues.

The protein belongs to the class-II aminoacyl-tRNA synthetase family. As to quaternary structure, tetramer of two alpha and two beta subunits.

The protein resides in the cytoplasm. The catalysed reaction is tRNA(Gly) + glycine + ATP = glycyl-tRNA(Gly) + AMP + diphosphate. In Leuconostoc citreum (strain KM20), this protein is Glycine--tRNA ligase beta subunit.